Here is a 742-residue protein sequence, read N- to C-terminus: Protein CdcH (742 aa).

ATP is bound by residues 230 to 237 and 503 to 510; these read GPPGTGKT. Residues 722–742 are disordered; that stretch reads FKGSQGPNVNSRQGSEHIGFQ. Residues 723–734 are compositionally biased toward polar residues; sequence KGSQGPNVNSRQ.

Belongs to the AAA ATPase family. CDC48 subfamily.

Its function is as follows. May be part of a transduction pathway connecting light to cell division. This Halobacterium salinarum (strain ATCC 700922 / JCM 11081 / NRC-1) (Halobacterium halobium) protein is Protein CdcH (cdcH).